The chain runs to 315 residues: Methionyl-tRNA formyltransferase (315 aa).

Residue 110–113 (SLLP) participates in (6S)-5,6,7,8-tetrahydrofolate binding.

This sequence belongs to the Fmt family.

It carries out the reaction L-methionyl-tRNA(fMet) + (6R)-10-formyltetrahydrofolate = N-formyl-L-methionyl-tRNA(fMet) + (6S)-5,6,7,8-tetrahydrofolate + H(+). Functionally, attaches a formyl group to the free amino group of methionyl-tRNA(fMet). The formyl group appears to play a dual role in the initiator identity of N-formylmethionyl-tRNA by promoting its recognition by IF2 and preventing the misappropriation of this tRNA by the elongation apparatus. The polypeptide is Methionyl-tRNA formyltransferase (Lactobacillus delbrueckii subsp. bulgaricus (strain ATCC BAA-365 / Lb-18)).